The chain runs to 528 residues: Cytoplasmic tRNA 2-thiolation protein 2 (528 aa).

Disordered stretches follow at residues 1-23 (MCQA…PRPS) and 196-219 (PAQG…GHPK). Cys2 carries the post-translational modification N-acetylcysteine. A compositionally biased stretch (polar residues) spans 197–212 (AQGQGQLRPSHSQEPS). Phosphoserine is present on Ser416. Positions 504–528 (EEEEEDRAEPCEAMKQEAEDKGIGL) are disordered. Over residues 511–528 (AEPCEAMKQEAEDKGIGL) the composition is skewed to basic and acidic residues.

The protein belongs to the CTU2/NCS2 family. Component of a complex at least composed of URM1, CTU2/NCS2 and CTU1/ATPBD3.

It localises to the cytoplasm. It participates in tRNA modification; 5-methoxycarbonylmethyl-2-thiouridine-tRNA biosynthesis. Plays a central role in 2-thiolation of mcm(5)S(2)U at tRNA wobble positions of tRNA(Lys), tRNA(Glu) and tRNA(Gln). May act by forming a heterodimer with CTU1/ATPBD3 that ligates sulfur from thiocarboxylated URM1 onto the uridine of tRNAs at wobble position. This is Cytoplasmic tRNA 2-thiolation protein 2 (Ctu2) from Rattus norvegicus (Rat).